Consider the following 557-residue polypeptide: E3 ubiquitin-protein ligase ARIH1 (557 aa).

The segment covering Met1–Leu47 has biased composition (acidic residues). A disordered region spans residues Met1–Gln95. A compositionally biased stretch (gly residues) spans Glu65–Gly92. The segment at Thr105–Asn153 is UBA-like. Lys142 is subject to N6-acetyllysine. The interval Gln182 to Asn393 is TRIAD supradomain. Cys186, Cys189, Cys203, His205, Cys208, Cys211, Cys231, Cys236, Cys276, Cys281, Cys297, Cys299, Cys304, Cys307, His312, Cys317, Cys344, and Cys347 together coordinate Zn(2+). The segment at Cys186–Cys236 adopts an RING-type 1 zinc-finger fold. An IBR-type zinc finger spans residues Leu256–Cys317. The RING-type 2; atypical zinc-finger motif lies at Cys344–Cys375. Cys357 is a catalytic residue. Zn(2+) is bound by residues Cys362, Cys367, Cys372, Cys375, His382, and Cys389. Residues Arg408–Asp557 form an ariadne domain region.

Belongs to the RBR family. Ariadne subfamily. As to quaternary structure, interacts (via the first RING-type zinc finger) with UBE2L3. Associates with cullin-RING ubiquitin ligase (CRL) complexes containing CUL1, CUL2 and CUL3. Interacts with neddylated CUL1. Interacts with neddylated CUL2. Interacts with neddylated CUL3. Interacts with neddylated CUL4A. Widely expressed.

Its subcellular location is the cytoplasm. It localises to the nucleus. The protein resides in the cajal body. The enzyme catalyses [E2 ubiquitin-conjugating enzyme]-S-ubiquitinyl-L-cysteine + [acceptor protein]-L-lysine = [E2 ubiquitin-conjugating enzyme]-L-cysteine + [acceptor protein]-N(6)-ubiquitinyl-L-lysine.. It functions in the pathway protein modification; protein ubiquitination. With respect to regulation, autoinhibited by the ariadne domain, which masks the second RING-type zinc finger that contains the active site and inhibits the E3 activity. Inhibition is relieved upon binding to neddylated cullin-RING ubiquitin ligase complexes, which activate the E3 ligase activity of ARIH1. Functionally, E3 ubiquitin-protein ligase, which catalyzes ubiquitination of target proteins together with ubiquitin-conjugating enzyme E2 UBE2L3. Acts as an atypical E3 ubiquitin-protein ligase by working together with cullin-RING ubiquitin ligase (CRL) complexes and initiating ubiquitination of CRL substrates: associates with CRL complexes and specifically mediates addition of the first ubiquitin on CRLs targets. The initial ubiquitin is then elongated by CDC34/UBE2R1 and UBE2R2. E3 ubiquitin-protein ligase activity is activated upon binding to neddylated cullin-RING ubiquitin ligase complexes. Plays a role in protein translation in response to DNA damage by mediating ubiquitination of EIF4E2, the consequences of EIF4E2 ubiquitination are however unclear. According to a report, EIF4E2 ubiquitination leads to promote EIF4E2 cap-binding and protein translation arrest. According to another report EIF4E2 ubiquitination leads to its subsequent degradation. Acts as the ligase involved in ISGylation of EIF4E2. In vitro, controls the degradation of the LINC (LInker of Nucleoskeleton and Cytoskeleton) complex member SUN2 and may therefore have a role in the formation and localization of the LINC complex, and as a consequence, nuclear subcellular localization and nuclear morphology. This Homo sapiens (Human) protein is E3 ubiquitin-protein ligase ARIH1.